The primary structure comprises 233 residues: Protein lin-7 homolog A (233 aa).

The L27 domain occupies 25 to 80; sequence LDRDVARAIELLEKLQESGEVPVHKLQSLKKVLQSEFCTAIREVYQYMHETITVNG. Residues 108 to 190 enclose the PDZ domain; sequence VVELPKTDEG…SVKLVVRYTP (83 aa).

This sequence belongs to the lin-7 family. Forms a complex with CASK and CASKIN1. Component of the brain-specific heterotrimeric complex (LIN-10-LIN-2-LIN-7 complex) composed of at least APBA1, CASK, and LIN7, which associates with the motor protein KIF17 to transport vesicles along microtubules. Can also interact with other modular proteins containing protein-protein interaction domains like PALS1, PALS2, MPP7, DLG1, DLG2 and DLG3 through its L27 domain. Interacts with DLG4, GRIN2B and MARCHF11 as well as CDH1 and CTNNB1, the channels KCNJ12/Kir2.2, KCNJ4/Kir2.3 and probably KCNJ2/Kir2.1 and SLC6A12/BGT-1 via its PDZ domain. The association of LIN7A with cadherin and beta-catenin is calcium-dependent, occurs at synaptic junctions and requires the actin cytoskeleton. Interacts with EGFR, ERBB2, ERBB3 and ERBB4 with both PDZ and KID domains. Associates with KIF17 via APBA1. Interacts with HTR4. Forms a tripartite complex composed of DLG1, MPP7 and LIN7 (LIN7A or LIN7C).

The protein resides in the cell membrane. It is found in the basolateral cell membrane. It localises to the cell junction. Its subcellular location is the postsynaptic density membrane. The protein localises to the tight junction. Functionally, plays a role in establishing and maintaining the asymmetric distribution of channels and receptors at the plasma membrane of polarized cells. Forms membrane-associated multiprotein complexes that may regulate delivery and recycling of proteins to the correct membrane domains. The tripartite complex composed of LIN7 (LIN7A, LIN7B or LIN7C), CASK and APBA1 associates with the motor protein KIF17 to transport vesicles containing N-methyl-D-aspartate (NMDA) receptor subunit NR2B along microtubules. This complex may have the potential to couple synaptic vesicle exocytosis to cell adhesion in brain. Ensures the proper localization of GRIN2B (subunit 2B of the NMDA receptor) to neuronal postsynaptic density and may function in localizing synaptic vesicles at synapses where it is recruited by beta-catenin and cadherin. Required to localize Kir2 channels, GABA transporter (SLC6A12) and EGFR/ERBB1, ERBB2, ERBB3 and ERBB4 to the basolateral membrane of epithelial cells. The chain is Protein lin-7 homolog A (LIN7A) from Bos taurus (Bovine).